Consider the following 117-residue polypeptide: Regulator of ribonuclease activity B (117 aa).

Belongs to the RraB family. As to quaternary structure, interacts with the C-terminal region of Rne.

The protein resides in the cytoplasm. In terms of biological role, globally modulates RNA abundance by binding to RNase E (Rne) and regulating its endonucleolytic activity. Can modulate Rne action in a substrate-dependent manner by altering the composition of the degradosome. The protein is Regulator of ribonuclease activity B of Pseudoalteromonas atlantica (strain T6c / ATCC BAA-1087).